The chain runs to 397 residues: Acetate kinase (397 aa).

Asn-7 lines the Mg(2+) pocket. Position 14 (Lys-14) interacts with ATP. Arg-90 serves as a coordination point for substrate. Residue Asp-147 is the Proton donor/acceptor of the active site. ATP is bound by residues 207–211, 282–284, and 330–334; these read HLGNG, DFR, and GLGEN. Glu-383 contributes to the Mg(2+) binding site.

The protein belongs to the acetokinase family. As to quaternary structure, homodimer. It depends on Mg(2+) as a cofactor. Mn(2+) serves as cofactor.

The protein resides in the cytoplasm. It catalyses the reaction acetate + ATP = acetyl phosphate + ADP. It functions in the pathway metabolic intermediate biosynthesis; acetyl-CoA biosynthesis; acetyl-CoA from acetate: step 1/2. Functionally, catalyzes the formation of acetyl phosphate from acetate and ATP. Can also catalyze the reverse reaction. The polypeptide is Acetate kinase (Clostridium botulinum (strain 657 / Type Ba4)).